Consider the following 373-residue polypeptide: Putative zinc finger protein 012R (373 aa).

The segment at 2-29 (FECTHCDLHFESKSKLATHQKTKKCTAH) adopts a C2H2-type zinc-finger fold.

This sequence belongs to the IIV-6 302L family.

The sequence is that of Putative zinc finger protein 012R from Invertebrate iridescent virus 3 (IIV-3).